The primary structure comprises 545 residues: Chaperonin GroEL (545 aa).

ATP-binding positions include 30 to 33, Lys-51, 87 to 91, Gly-415, 479 to 481, and Asp-495; these read TLGP, DGTTT, and NAA.

Belongs to the chaperonin (HSP60) family. In terms of assembly, forms a cylinder of 14 subunits composed of two heptameric rings stacked back-to-back. Interacts with the co-chaperonin GroES.

Its subcellular location is the cytoplasm. It carries out the reaction ATP + H2O + a folded polypeptide = ADP + phosphate + an unfolded polypeptide.. Its function is as follows. Together with its co-chaperonin GroES, plays an essential role in assisting protein folding. The GroEL-GroES system forms a nano-cage that allows encapsulation of the non-native substrate proteins and provides a physical environment optimized to promote and accelerate protein folding. This is Chaperonin GroEL from Salmonella agona (strain SL483).